Consider the following 879-residue polypeptide: DNA mismatch repair protein MutS (879 aa).

An ATP-binding site is contributed by 629–636 (GPNMGGKS).

Belongs to the DNA mismatch repair MutS family.

This protein is involved in the repair of mismatches in DNA. It is possible that it carries out the mismatch recognition step. This protein has a weak ATPase activity. This chain is DNA mismatch repair protein MutS, found in Erythrobacter litoralis (strain HTCC2594).